Consider the following 175-residue polypeptide: Translation initiation factor IF-3 (175 aa).

It belongs to the IF-3 family. As to quaternary structure, monomer.

It is found in the cytoplasm. Its function is as follows. IF-3 binds to the 30S ribosomal subunit and shifts the equilibrium between 70S ribosomes and their 50S and 30S subunits in favor of the free subunits, thus enhancing the availability of 30S subunits on which protein synthesis initiation begins. This Staphylococcus epidermidis (strain ATCC 35984 / DSM 28319 / BCRC 17069 / CCUG 31568 / BM 3577 / RP62A) protein is Translation initiation factor IF-3.